A 516-amino-acid polypeptide reads, in one-letter code: Golgi-associated kinase 1B (516 aa).

The Cytoplasmic portion of the chain corresponds to 1 to 37 (MTCPDKLGQLINWFVCSLCAPRVCKLWSSRRPRTRRN). A helical; Signal-anchor for type II membrane protein membrane pass occupies residues 38–55 (LLLGTACAIYLGFLVSQV). Residues 56–516 (GKGSFQHGQA…HGARVLPMNE (461 aa)) lie on the Extracellular side of the membrane. The N-linked (GlcNAc...) asparagine glycan is linked to Asn-286.

It belongs to the GASK family.

The protein resides in the golgi apparatus membrane. The chain is Golgi-associated kinase 1B from Rattus norvegicus (Rat).